The primary structure comprises 32 residues: Cathepsin B-like cysteine proteinase (32 aa).

Residues 1–22 (KPNYKRQFEPFSDELIHYINLE) constitute a propeptide, activation peptide.

The protein belongs to the peptidase C1 family.

Functionally, thiol protease. This is Cathepsin B-like cysteine proteinase from Fasciola hepatica (Liver fluke).